The following is an 876-amino-acid chain: AP-5 complex subunit beta-1 (876 aa).

In terms of assembly, probably part of the adaptor protein complex 5 (AP-5), a tetramer composed of AP5B1, AP5M1, AP5S1 and AP5Z1. Interacts with ZFYVE26 and SPG11.

Its function is as follows. As part of AP-5, a probable fifth adaptor protein complex, it may be involved in endosomal transport. The chain is AP-5 complex subunit beta-1 (Ap5b1) from Rattus norvegicus (Rat).